A 379-amino-acid chain; its full sequence is Succinyl-diaminopimelate desuccinylase (379 aa).

Histidine 70 provides a ligand contact to Zn(2+). Residue aspartate 72 is part of the active site. Aspartate 103 provides a ligand contact to Zn(2+). Glutamate 137 (proton acceptor) is an active-site residue. Residues glutamate 138, glutamate 166, and histidine 352 each coordinate Zn(2+).

It belongs to the peptidase M20A family. DapE subfamily. Homodimer. Zn(2+) is required as a cofactor. Requires Co(2+) as cofactor.

It catalyses the reaction N-succinyl-(2S,6S)-2,6-diaminopimelate + H2O = (2S,6S)-2,6-diaminopimelate + succinate. The protein operates within amino-acid biosynthesis; L-lysine biosynthesis via DAP pathway; LL-2,6-diaminopimelate from (S)-tetrahydrodipicolinate (succinylase route): step 3/3. In terms of biological role, catalyzes the hydrolysis of N-succinyl-L,L-diaminopimelic acid (SDAP), forming succinate and LL-2,6-diaminopimelate (DAP), an intermediate involved in the bacterial biosynthesis of lysine and meso-diaminopimelic acid, an essential component of bacterial cell walls. In Shewanella baltica (strain OS195), this protein is Succinyl-diaminopimelate desuccinylase.